The chain runs to 72 residues: Translation initiation factor IF-1 (72 aa).

An S1-like domain is found at 1-72; the sequence is MSNDDSIEFE…TKGRITYRMK (72 aa).

It belongs to the IF-1 family. As to quaternary structure, component of the 30S ribosomal translation pre-initiation complex which assembles on the 30S ribosome in the order IF-2 and IF-3, IF-1 and N-formylmethionyl-tRNA(fMet); mRNA recruitment can occur at any time during PIC assembly.

The protein resides in the cytoplasm. In terms of biological role, one of the essential components for the initiation of protein synthesis. Stabilizes the binding of IF-2 and IF-3 on the 30S subunit to which N-formylmethionyl-tRNA(fMet) subsequently binds. Helps modulate mRNA selection, yielding the 30S pre-initiation complex (PIC). Upon addition of the 50S ribosomal subunit IF-1, IF-2 and IF-3 are released leaving the mature 70S translation initiation complex. This chain is Translation initiation factor IF-1, found in Xanthomonas campestris pv. campestris (strain B100).